The sequence spans 313 residues: MSQSRHRAAAPPMEREDSGTFSLGKMITAKPGKTPIQVLHEYGMKTKNIPVYECERSDVQIHVPTFTFRVTVGDITCTGEGTSKKLAKHRAAEAAINILKANASICFAVPDPLMPDPSKQPKNQLNPIGSLQELAIHHGWRLPEYTLSQEGGPAHKREYTTICRLESFMETGKGASKKQAKRNAAEKFLAKFSNISPENHISLTNMVGHSLGCTWHSLRNSPGEKINLLKRSLLSIPNTDYIQLLSEIAKEQGFNITYLDIEELSANGQYQCLAELSTSPITVCHGSGISCSSAQSDAAHNALQYLKIIAERK.

Positions 1–21 are disordered; the sequence is MSQSRHRAAAPPMEREDSGTF. Sufficient for self-association and interaction with TARBP2 regions lie at residues 1-103, 102-195, and 195-313; these read MSQS…KANA, NASI…FSNI, and ISPE…AERK. At serine 18 the chain carries Phosphoserine. DRBM domains are found at residues 34 to 101, 126 to 194, and 240 to 308; these read TPIQ…ILKA, NPIG…KFSN, and DYIQ…YLKI. A phosphoserine mark is found at serine 167, serine 246, and serine 287.

Belongs to the PRKRA family. As to quaternary structure, homodimer. Interacts with EIF2AK2/PKR through its DRBM domains. Interacts with DICER1, AGO2 and TARBP2. Also able to interact with dsRNA. Interacts with UBC9. Forms a complex with UBC9 and p53/TP53. Interacts with DUS2L (via DRBM domain). In terms of processing, phosphorylated at Ser-246 in unstressed cells and at Ser-287 in stressed cells. Phosphorylation at Ser-246 appears to be a prerequisite for subsequent phosphorylation at Ser-287. Phosphorylation at Ser-246 and Ser-287 are necessary for activation of EIF2AK2/PKR under conditions of stress.

Its subcellular location is the cytoplasm. The protein localises to the perinuclear region. Its function is as follows. Activates EIF2AK2/PKR in the absence of double-stranded RNA (dsRNA), leading to phosphorylation of EIF2S1/EFI2-alpha and inhibition of translation and induction of apoptosis. Required for siRNA production by DICER1 and for subsequent siRNA-mediated post-transcriptional gene silencing. Does not seem to be required for processing of pre-miRNA to miRNA by DICER1. Promotes UBC9-p53/TP53 association and sumoylation and phosphorylation of p53/TP53 at 'Lys-386' at 'Ser-392' respectively and enhances its activity in a EIF2AK2/PKR-dependent manner. The chain is Interferon-inducible double-stranded RNA-dependent protein kinase activator A (PRKRA) from Bos taurus (Bovine).